A 612-amino-acid chain; its full sequence is Sulfite reductase [NADPH] hemoprotein beta-component (612 aa).

Residues 1 to 26 (MDDHKPIETPDGPAVDTPGIGARRYE) are disordered. [4Fe-4S] cluster is bound by residues Cys469, Cys475, Cys514, and Cys518. Cys518 provides a ligand contact to siroheme.

This sequence belongs to the nitrite and sulfite reductase 4Fe-4S domain family. As to quaternary structure, alpha(8)-beta(8). The alpha component is a flavoprotein, the beta component is a hemoprotein. Siroheme serves as cofactor. The cofactor is [4Fe-4S] cluster.

The catalysed reaction is hydrogen sulfide + 3 NADP(+) + 3 H2O = sulfite + 3 NADPH + 4 H(+). It participates in sulfur metabolism; hydrogen sulfide biosynthesis; hydrogen sulfide from sulfite (NADPH route): step 1/1. Its function is as follows. Component of the sulfite reductase complex that catalyzes the 6-electron reduction of sulfite to sulfide. This is one of several activities required for the biosynthesis of L-cysteine from sulfate. The sequence is that of Sulfite reductase [NADPH] hemoprotein beta-component from Methylorubrum extorquens (strain CM4 / NCIMB 13688) (Methylobacterium extorquens).